Consider the following 453-residue polypeptide: MTTDTIVAQATAPGRGGVGIIRISGDKASDVAMAVLGHLPKTRYADYCDFKDAENAVIDQGIALYFQGPNSFTGEDVLELQGHGGQIVLDMLIKRVMEVDGVRIAKPGEFSEQAFMNDKMDLTQAEAIADLIDATSEQAAKSALNSLQGEFSVQIHELVEQVTNLRLYVEAAIDFPDEEVDFLSDGKIAGSLNRIITKLDSVQASAKQGAIIREGMKVVIAGRPNAGKSSLLNALAGKESAIVTEIAGTTRDVLREHIHLDGMPLHIIDTAGLRDTDDTVEMIGIERAWAEIETADQVLFMVDGTTTDAVDPREIWPDFIDRLPKNLGITVVRNKADITGEPLTVTQDHGHSVFKISAKTGLGVESLQQHLKSLMGYQSNLEGGFIARRRHLEALDLASSHLMIGKEQLEVYLAGELLAEELRMTQMALSEITGKFTSDDLLGKIFSSFCIGK.

3 residues coordinate (6S)-5-formyl-5,6,7,8-tetrahydrofolate: Arg22, Glu79, and Lys119. Residues 215–376 (GMKVVIAGRP…LQQHLKSLMG (162 aa)) form the TrmE-type G domain. Residue Asn225 participates in K(+) binding. Residues 225 to 230 (NAGKSS), 244 to 250 (TEIAGTT), 269 to 272 (DTAG), and 334 to 337 (NKAD) each bind GTP. Residue Ser229 coordinates Mg(2+). Residues Thr244, Ile246, and Thr249 each contribute to the K(+) site. Thr250 contacts Mg(2+). (6S)-5-formyl-5,6,7,8-tetrahydrofolate is bound at residue Lys453.

The protein belongs to the TRAFAC class TrmE-Era-EngA-EngB-Septin-like GTPase superfamily. TrmE GTPase family. As to quaternary structure, homodimer. Heterotetramer of two MnmE and two MnmG subunits. K(+) is required as a cofactor.

The protein resides in the cytoplasm. Exhibits a very high intrinsic GTPase hydrolysis rate. Involved in the addition of a carboxymethylaminomethyl (cmnm) group at the wobble position (U34) of certain tRNAs, forming tRNA-cmnm(5)s(2)U34. This Shewanella woodyi (strain ATCC 51908 / MS32) protein is tRNA modification GTPase MnmE.